We begin with the raw amino-acid sequence, 284 residues long: Phosphatidylserine decarboxylase proenzyme (284 aa).

Residues Asp-88, His-145, and Ser-248 each act as charge relay system; for autoendoproteolytic cleavage activity in the active site. Catalysis depends on Ser-248, which acts as the Schiff-base intermediate with substrate; via pyruvic acid; for decarboxylase activity. A Pyruvic acid (Ser); by autocatalysis modification is found at Ser-248.

Belongs to the phosphatidylserine decarboxylase family. PSD-B subfamily. Prokaryotic type I sub-subfamily. Heterodimer of a large membrane-associated beta subunit and a small pyruvoyl-containing alpha subunit. Pyruvate is required as a cofactor. Is synthesized initially as an inactive proenzyme. Formation of the active enzyme involves a self-maturation process in which the active site pyruvoyl group is generated from an internal serine residue via an autocatalytic post-translational modification. Two non-identical subunits are generated from the proenzyme in this reaction, and the pyruvate is formed at the N-terminus of the alpha chain, which is derived from the carboxyl end of the proenzyme. The autoendoproteolytic cleavage occurs by a canonical serine protease mechanism, in which the side chain hydroxyl group of the serine supplies its oxygen atom to form the C-terminus of the beta chain, while the remainder of the serine residue undergoes an oxidative deamination to produce ammonia and the pyruvoyl prosthetic group on the alpha chain. During this reaction, the Ser that is part of the protease active site of the proenzyme becomes the pyruvoyl prosthetic group, which constitutes an essential element of the active site of the mature decarboxylase.

The protein localises to the cell membrane. It catalyses the reaction a 1,2-diacyl-sn-glycero-3-phospho-L-serine + H(+) = a 1,2-diacyl-sn-glycero-3-phosphoethanolamine + CO2. The protein operates within phospholipid metabolism; phosphatidylethanolamine biosynthesis; phosphatidylethanolamine from CDP-diacylglycerol: step 2/2. Its function is as follows. Catalyzes the formation of phosphatidylethanolamine (PtdEtn) from phosphatidylserine (PtdSer). The sequence is that of Phosphatidylserine decarboxylase proenzyme from Delftia acidovorans (strain DSM 14801 / SPH-1).